Here is a 433-residue protein sequence, read N- to C-terminus: 3-phosphoshikimate 1-carboxyvinyltransferase (433 aa).

3-phosphoshikimate-binding residues include Lys22, Ser23, and Arg27. Lys22 serves as a coordination point for phosphoenolpyruvate. Gly95 and Arg123 together coordinate phosphoenolpyruvate. Ser167, Gln169, Asp315, and Lys342 together coordinate 3-phosphoshikimate. Gln169 contacts phosphoenolpyruvate. Catalysis depends on Asp315, which acts as the Proton acceptor. Phosphoenolpyruvate is bound by residues Arg346 and Arg387.

It belongs to the EPSP synthase family. As to quaternary structure, monomer.

Its subcellular location is the cytoplasm. It carries out the reaction 3-phosphoshikimate + phosphoenolpyruvate = 5-O-(1-carboxyvinyl)-3-phosphoshikimate + phosphate. Its pathway is metabolic intermediate biosynthesis; chorismate biosynthesis; chorismate from D-erythrose 4-phosphate and phosphoenolpyruvate: step 6/7. Its function is as follows. Catalyzes the transfer of the enolpyruvyl moiety of phosphoenolpyruvate (PEP) to the 5-hydroxyl of shikimate-3-phosphate (S3P) to produce enolpyruvyl shikimate-3-phosphate and inorganic phosphate. This Legionella pneumophila (strain Lens) protein is 3-phosphoshikimate 1-carboxyvinyltransferase.